The primary structure comprises 504 residues: Cytochrome P450 4A24 (504 aa).

The next 2 membrane-spanning stretches (helical) occupy residues Leu6 to Leu26 and Val112 to Thr132. Cys451 serves as a coordination point for heme.

This sequence belongs to the cytochrome P450 family. Heme serves as cofactor.

It is found in the endoplasmic reticulum membrane. The catalysed reaction is an omega-methyl-long-chain fatty acid + reduced [NADPH--hemoprotein reductase] + O2 = an omega-hydroxy-long-chain fatty acid + oxidized [NADPH--hemoprotein reductase] + H2O + H(+). Its function is as follows. Catalyzes the omega- and (omega-1)-hydroxylation of various fatty acids such as laurate and palmitate. Has no activity toward taurochenodeoxycholic acid. The protein is Cytochrome P450 4A24 (CYP4A24) of Sus scrofa (Pig).